The following is a 363-amino-acid chain: Teichoic acids export ATP-binding protein TagH (363 aa).

In terms of domain architecture, ABC transporter spans 27-246; it reads KHFFNIGNVD…YRKFSKDFKA (220 aa). ATP is bound at residue 60–67; sequence GINGSGKS. Residues 247–363 are unknown; it reads QTAAYRKKYQ…KSQSVLFNSK (117 aa).

This sequence belongs to the ABC transporter superfamily. Teichoic acids exporter (TC 3.A.1.104.1) family. In terms of assembly, the complex is composed of two ATP-binding proteins (TagH) and two transmembrane proteins (TagG).

It is found in the cell membrane. It catalyses the reaction ATP + H2O + teichoic acidSide 1 = ADP + phosphate + teichoic acidSide 2.. Part of the ABC transporter complex TagGH involved in teichoic acids export. Responsible for energy coupling to the transport system. This Lactiplantibacillus plantarum (strain ATCC BAA-793 / NCIMB 8826 / WCFS1) (Lactobacillus plantarum) protein is Teichoic acids export ATP-binding protein TagH.